Reading from the N-terminus, the 154-residue chain is Myoglobin (154 aa).

Positions 2-148 (GLSDGEWQLV…FRNEMAAQYK (147 aa)) constitute a Globin domain. Position 4 is a phosphoserine (Ser-4). His-65 contributes to the nitrite binding site. His-65 provides a ligand contact to O2. Thr-68 bears the Phosphothreonine mark. His-94 contributes to the heme b binding site.

In terms of assembly, monomeric.

It is found in the cytoplasm. Its subcellular location is the sarcoplasm. It catalyses the reaction Fe(III)-heme b-[protein] + nitric oxide + H2O = Fe(II)-heme b-[protein] + nitrite + 2 H(+). The catalysed reaction is H2O2 + AH2 = A + 2 H2O. Its function is as follows. Monomeric heme protein which primary function is to store oxygen and facilitate its diffusion within muscle tissues. Reversibly binds oxygen through a pentacoordinated heme iron and enables its timely and efficient release as needed during periods of heightened demand. Depending on the oxidative conditions of tissues and cells, and in addition to its ability to bind oxygen, it also has a nitrite reductase activity whereby it regulates the production of bioactive nitric oxide. Under stress conditions, like hypoxia and anoxia, it also protects cells against reactive oxygen species thanks to its pseudoperoxidase activity. This is Myoglobin from Bubalus bubalis (Domestic water buffalo).